A 299-amino-acid chain; its full sequence is Tyrosine recombinase XerC (299 aa).

Residues M1–N85 enclose the Core-binding (CB) domain. One can recognise a Tyr recombinase domain in the interval R106 to D285. Active-site residues include R146, K170, H237, R240, and H263. The active-site O-(3'-phospho-DNA)-tyrosine intermediate is the Y272.

This sequence belongs to the 'phage' integrase family. XerC subfamily. As to quaternary structure, forms a cyclic heterotetrameric complex composed of two molecules of XerC and two molecules of XerD.

The protein localises to the cytoplasm. Its function is as follows. Site-specific tyrosine recombinase, which acts by catalyzing the cutting and rejoining of the recombining DNA molecules. The XerC-XerD complex is essential to convert dimers of the bacterial chromosome into monomers to permit their segregation at cell division. It also contributes to the segregational stability of plasmids. The protein is Tyrosine recombinase XerC of Pseudomonas syringae pv. tomato (strain ATCC BAA-871 / DC3000).